The sequence spans 534 residues: Calcium uptake protein 1 homolog, mitochondrial (534 aa).

A mitochondrion-targeting transit peptide spans 1–32 (MLHCSFLRVIPIKNASKRLIIVRSLTSAPAKT). The tract at residues 131-150 (PEASQKEEVTESNGEVEEVK) is disordered. EF-hand domains are found at residues 271-306 (TSHA…IMSQ), 338-359 (KDGK…LQHD), and 466-501 (LSDH…RMRR). Ca(2+) contacts are provided by Asp-284, Asp-286, Asn-288, and Glu-295.

It belongs to the MICU1 family. MICU1 subfamily. As to expression, expressed at low levels in PLM touch receptor neurons, germ cells, epidermis, and muscles.

Its subcellular location is the mitochondrion intermembrane space. The protein resides in the mitochondrion inner membrane. In terms of biological role, calcium sensor of the mitochondrial calcium uniporter (mcu-1) channel, which senses calcium level via its EF-hand domains. At low calcium levels, micu-1 occludes the pore of the mcu-1 channel, preventing mitochondrial calcium uptake. At higher calcium levels, calcium-binding to micu-1 induces a conformational change that weakens mcu-1-micu-1 interactions and moves micu-1 away from the pore, allowing calcium permeation through the mcu-1 channel. Also required to protect against manganese toxicity by preventing manganese uptake by mcu-1. Modulates the activity of the mitochondrial calcium uniporter protein mcu-1 depending on the level of intracellular calcium in PLM touch receptor neurons following axonal injury. The polypeptide is Calcium uptake protein 1 homolog, mitochondrial (Caenorhabditis elegans).